The following is a 68-amino-acid chain: MVSVKVREGESIEEAIRRFKRECERNGVMQEIKKREFYKTPSILKKEKLAETKRKIRRKMFKDSKWSK.

It belongs to the bacterial ribosomal protein bS21 family.

The polypeptide is Small ribosomal subunit protein bS21 (Endomicrobium trichonymphae).